A 492-amino-acid chain; its full sequence is Catalase-3 (492 aa).

Residues His-65 and Asn-138 contribute to the active site. Residue Tyr-348 participates in heme binding.

It belongs to the catalase family. In terms of assembly, homotetramer. Heme is required as a cofactor.

It is found in the peroxisome. The protein resides in the glyoxysome. It catalyses the reaction 2 H2O2 = O2 + 2 H2O. In terms of biological role, occurs in almost all aerobically respiring organisms and serves to protect cells from the toxic effects of hydrogen peroxide. In Glycine max (Soybean), this protein is Catalase-3 (CAT3).